The chain runs to 122 residues: Ribonuclease P protein component (122 aa).

It belongs to the RnpA family. In terms of assembly, consists of a catalytic RNA component (M1 or rnpB) and a protein subunit.

It catalyses the reaction Endonucleolytic cleavage of RNA, removing 5'-extranucleotides from tRNA precursor.. RNaseP catalyzes the removal of the 5'-leader sequence from pre-tRNA to produce the mature 5'-terminus. It can also cleave other RNA substrates such as 4.5S RNA. The protein component plays an auxiliary but essential role in vivo by binding to the 5'-leader sequence and broadening the substrate specificity of the ribozyme. The chain is Ribonuclease P protein component from Halorhodospira halophila (strain DSM 244 / SL1) (Ectothiorhodospira halophila (strain DSM 244 / SL1)).